We begin with the raw amino-acid sequence, 132 residues long: Probable prefoldin subunit 4 (132 aa).

Belongs to the prefoldin subunit beta family. Heterohexamer of two PFD-alpha type and four PFD-beta type subunits.

In terms of biological role, binds specifically to cytosolic chaperonin (c-CPN) and transfers target proteins to it. Binds to nascent polypeptide chain and promotes folding in an environment in which there are many competing pathways for nonnative proteins. The chain is Probable prefoldin subunit 4 (pfdn4) from Dictyostelium discoideum (Social amoeba).